A 237-amino-acid polypeptide reads, in one-letter code: Ribonuclease PH (237 aa).

Residues Arg86 and 124–126 (GTR) contribute to the phosphate site.

This sequence belongs to the RNase PH family. Homohexameric ring arranged as a trimer of dimers.

It carries out the reaction tRNA(n+1) + phosphate = tRNA(n) + a ribonucleoside 5'-diphosphate. Functionally, phosphorolytic 3'-5' exoribonuclease that plays an important role in tRNA 3'-end maturation. Removes nucleotide residues following the 3'-CCA terminus of tRNAs; can also add nucleotides to the ends of RNA molecules by using nucleoside diphosphates as substrates, but this may not be physiologically important. Probably plays a role in initiation of 16S rRNA degradation (leading to ribosome degradation) during starvation. This chain is Ribonuclease PH, found in Idiomarina loihiensis (strain ATCC BAA-735 / DSM 15497 / L2-TR).